A 753-amino-acid polypeptide reads, in one-letter code: 5-methyltetrahydropteroyltriglutamate--homocysteine methyltransferase (753 aa).

5-methyltetrahydropteroyltri-L-glutamate contacts are provided by residues 17-20 (RELK) and Lys-117. Residues 431 to 433 (IGS) and Glu-484 contribute to the L-homocysteine site. Residues 431–433 (IGS) and Glu-484 contribute to the L-methionine site. 5-methyltetrahydropteroyltri-L-glutamate is bound by residues 515–516 (RC) and Trp-561. Residue Asp-599 coordinates L-homocysteine. Asp-599 contributes to the L-methionine binding site. Position 605 (Glu-605) interacts with 5-methyltetrahydropteroyltri-L-glutamate. Residues His-641, Cys-643, and Glu-665 each contribute to the Zn(2+) site. His-694 serves as the catalytic Proton donor. Cys-726 contacts Zn(2+).

Belongs to the vitamin-B12 independent methionine synthase family. It depends on Zn(2+) as a cofactor.

The catalysed reaction is 5-methyltetrahydropteroyltri-L-glutamate + L-homocysteine = tetrahydropteroyltri-L-glutamate + L-methionine. Its pathway is amino-acid biosynthesis; L-methionine biosynthesis via de novo pathway; L-methionine from L-homocysteine (MetE route): step 1/1. In terms of biological role, catalyzes the transfer of a methyl group from 5-methyltetrahydrofolate to homocysteine resulting in methionine formation. In Escherichia coli O157:H7, this protein is 5-methyltetrahydropteroyltriglutamate--homocysteine methyltransferase.